The following is a 312-amino-acid chain: MAATAAVSGVLRRLGWRLLQLRCLPVARCQSPLMPRAFHTAVGFRSSEEQRQQPPHSSQQHSETQGPEFSRPPPRYTDQSGEEEEDYESEEQIQHRILTAALEFVPDHGWTAEAIAEGAQSLGLSSAAASMFGSDGSELILHFVTQCNARLNHVLEEEQKLVQLGQAEKRKTDQFLRDAVETRLRMLIPYIEHWPRALSILLLPQNIPPSLSLLTSMVDDMWHYAGDQSTDFNWYTRRAVLAGIYNTTELVMMQDSSPDFEDTWRFLDNRINDAMNMGHTAKQVKSTGEALVQGLMGAAVTLKNLTGLNQRR.

A mitochondrion-targeting transit peptide spans 1-45; that stretch reads MAATAAVSGVLRRLGWRLLQLRCLPVARCQSPLMPRAFHTAVGFR. The SIFI-degron motif lies at 17–32; that stretch reads RLLQLRCLPVARCQSP. Residues 43 to 92 form a disordered region; it reads GFRSSEEQRQQPPHSSQQHSETQGPEFSRPPPRYTDQSGEEEEDYESEEQ. Positions 52–63 are enriched in low complexity; sequence QQPPHSSQQHSE. Residue Ser-80 is modified to Phosphoserine. Residues 80 to 91 are compositionally biased toward acidic residues; that stretch reads SGEEEEDYESEE. Residue Lys-169 is modified to N6-acetyllysine. A 1,2-diacylglycero-3-phosphoethanolamine is bound at residue Arg-238.

Belongs to the COQ9 family. As to quaternary structure, homodimer. Heterodimer; two heterodimers of COQ7:COQ9 come together on the same side of the lipid pseudo-bilayer and form a curved tetramer with a hydrophobic surface suitable for membrane interaction. These two tetramers assemble into a soluble octamer with a pseudo-bilayer of lipids captured within. Interacts with COQ7; this interaction allows ubiquinone (CoQ) isoprene intermediates presentation to COQ7 and facilitates the COQ7-mediated hydroxylase step. In terms of processing, in response to mitochondrial stress, the precursor protein is ubiquitinated by the SIFI complex in the cytoplasm before mitochondrial import, leading to its degradation. Within the SIFI complex, UBR4 initiates ubiquitin chain that are further elongated or branched by KCMF1.

Its subcellular location is the mitochondrion. The protein operates within cofactor biosynthesis; ubiquinone biosynthesis. Membrane-associated protein that warps the membrane surface to access and bind aromatic isoprenes with high specificity, including ubiquinone (CoQ) isoprene intermediates and presents them directly to COQ7, therefore facilitating the COQ7-mediated hydroxylase step. Participates in the biosynthesis of coenzyme Q, also named ubiquinone, an essential lipid-soluble electron transporter for aerobic cellular respiration. In Rattus norvegicus (Rat), this protein is Ubiquinone biosynthesis protein COQ9, mitochondrial.